The sequence spans 88 residues: Probable glutaredoxin ssr2061 (88 aa).

Cys15 and Cys18 are disulfide-bonded.

Belongs to the glutaredoxin family.

Functionally, has a glutathione-disulfide oxidoreductase activity in the presence of NADPH and glutathione reductase. Reduces low molecular weight disulfides and proteins. The chain is Probable glutaredoxin ssr2061 from Synechocystis sp. (strain ATCC 27184 / PCC 6803 / Kazusa).